The primary structure comprises 502 residues: UPF0371 protein CTC_00401 (502 aa).

The protein belongs to the UPF0371 family.

In Clostridium tetani (strain Massachusetts / E88), this protein is UPF0371 protein CTC_00401.